The following is a 339-amino-acid chain: Bifunctional NMN adenylyltransferase/Nudix hydrolase (339 aa).

The interval 1 to 183 (MQTKYQYGIY…RYIALCDEYQ (183 aa)) is NMN adenylyltransferase. In terms of domain architecture, Nudix hydrolase spans 199–335 (PTFITTDAVV…EDHFQIIQHF (137 aa)). Residues 233–254 (GFIKQNETLVEGMLRELKEETR) carry the Nudix box motif.

It in the N-terminal section; belongs to the archaeal NMN adenylyltransferase family. It depends on Mg(2+) as a cofactor. The cofactor is Mn(2+).

It localises to the cytoplasm. The catalysed reaction is beta-nicotinamide D-ribonucleotide + ATP + H(+) = diphosphate + NAD(+). It participates in cofactor biosynthesis; NAD(+) biosynthesis; NAD(+) from nicotinamide D-ribonucleotide: step 1/1. Its function is as follows. The Nudix hydrolase domain is active on ADP-ribose, (2')-phospho-ADP-ribose, IDP-ribose and NADPH. This is Bifunctional NMN adenylyltransferase/Nudix hydrolase from Synechocystis sp. (strain ATCC 27184 / PCC 6803 / Kazusa).